The chain runs to 308 residues: Ribosomal protein uL3 glutamine methyltransferase (308 aa).

Belongs to the protein N5-glutamine methyltransferase family. PrmB subfamily.

It carries out the reaction L-glutaminyl-[ribosomal protein uL3] + S-adenosyl-L-methionine = N(5)-methyl-L-glutaminyl-[ribosomal protein uL3] + S-adenosyl-L-homocysteine + H(+). In terms of biological role, methylates large ribosomal subunit protein uL3 on a specific glutamine residue. This Xanthomonas campestris pv. campestris (strain ATCC 33913 / DSM 3586 / NCPPB 528 / LMG 568 / P 25) protein is Ribosomal protein uL3 glutamine methyltransferase.